We begin with the raw amino-acid sequence, 398 residues long: Phospholipase C (398 aa).

Residues 1–28 (MKKKFLKGLCCAFVISITCLGASSKAYG) form the signal peptide. Zn(2+)-binding residues include Trp-29, His-39, Asp-84, His-96, His-154, Asp-158, His-164, His-176, and Glu-180. The region spanning 29–278 (WDGKKDGTGT…YDVSKDLLPT (250 aa)) is the Zn-dependent PLC domain. The linker stretch occupies residues 275 to 283 (LLPTENHKI). The PLAT domain occupies 284-398 (NGLMVVIKTA…IHGNEKYYIN (115 aa)). Ca(2+)-binding residues include Gly-299, Thr-300, Asp-301, Asp-321, Asn-322, Gly-324, Asn-325, Asp-326, and Asp-364.

It belongs to the bacterial zinc-metallophospholipase C family. It depends on Ca(2+) as a cofactor. The cofactor is Zn(2+).

It localises to the secreted. It carries out the reaction a 1,2-diacyl-sn-glycero-3-phosphocholine + H2O = phosphocholine + a 1,2-diacyl-sn-glycerol + H(+). In terms of biological role, bacterial hemolysins are exotoxins that attack blood cell membranes and cause cell rupture. Binds to eukaryotic membranes where it hydrolyzes phosphatidylcholine, sphingomyelin and phosphatidylethanolamine. The diacylglycerol produced can activate both the arachidonic acid pathway, leading to modulation of the inflammatory response cascade and thrombosis, and protein kinase C, leading to activation of eukaryotic phospholipases and further membrane damage. This enzyme is hemolytic against horse erythrocytes. This Clostridium novyi protein is Phospholipase C (plc).